Here is a 203-residue protein sequence, read N- to C-terminus: TATA-binding protein 2 (203 aa).

A run of 2 repeats spans residues 28-104 (LQNI…ARII) and 118-195 (IQNI…YPVL).

Belongs to the TBP family. In terms of assembly, belongs to the TFIID complex together with the TBP-associated factors (TAFs). Binds DNA as monomer. Interacts with RF2A and TFIIB. Interacts with CWZF7.

The protein resides in the nucleus. In terms of biological role, general transcription factor that functions at the core of the DNA-binding multiprotein factor TFIID. Binding of TFIID to the TATA box is the initial transcriptional step of the pre-initiation complex (PIC), playing a role in the activation of eukaryotic genes transcribed by RNA polymerase II. The sequence is that of TATA-binding protein 2 (TBP2) from Oryza sativa subsp. japonica (Rice).